The primary structure comprises 473 residues: Keratin, type I cytoskeletal 16 (473 aa).

The interval 1–116 (MTTCSRQFTS…AGGDGLLVGS (116 aa)) is head. A coil 1A region spans residues 117-152 (EKVTMQNLNDRLASYLDKVRALEEANADLEVKIRDW). An IF rod domain is found at 117–428 (EKVTMQNLND…RLLEGEDAHL (312 aa)). A linker 1 region spans residues 153 to 170 (YQRQRPSEIKDYSPYFKT). Positions 171–262 (IEDLRNKIIA…KNHEEEMLAL (92 aa)) are coil 1B. The segment at 263 to 285 (RGQTGGDVNVEMDAAPGVDLSRI) is linker 12. Residues 286–424 (LNEMRDQYEQ…ATYRRLLEGE (139 aa)) form a coil 2 region. A tail region spans residues 425–473 (DAHLSSQQASGQSYSSREVFTSSSSSSSRQTRPILKEQSSSSFSQGQSS). Residues 428–473 (LSSQQASGQSYSSREVFTSSSSSSSRQTRPILKEQSSSSFSQGQSS) are disordered. 2 stretches are compositionally biased toward low complexity: residues 429–452 (SSQQASGQSYSSREVFTSSSSSSS) and 462–473 (QSSSSFSQGQSS).

This sequence belongs to the intermediate filament family. As to quaternary structure, heterodimer of a type I and a type II keratin. KRT16 associates with KRT6 isomers (KRT6A or KRT6B). Interacts with TCHP. Interacts with TRADD. In terms of tissue distribution, expressed in the corneal epithelium (at protein level).

Its function is as follows. Epidermis-specific type I keratin that plays a key role in skin. Acts as a regulator of innate immunity in response to skin barrier breach: required for some inflammatory checkpoint for the skin barrier maintenance. The polypeptide is Keratin, type I cytoskeletal 16 (KRT16) (Homo sapiens (Human)).